Reading from the N-terminus, the 352-residue chain is C-C chemokine receptor type 5 (352 aa).

Over 1 to 30 (MDYQVSSPTYDIDYYTSEPCQKINVKQIAA) the chain is Extracellular. Sulfotyrosine is present on tyrosine 3. O-linked (GalNAc...) serine glycosylation is found at serine 6 and serine 7. Sulfotyrosine occurs at positions 10, 14, and 15. 2 disulfides stabilise this stretch: cysteine 20–cysteine 269 and cysteine 101–cysteine 178. The helical transmembrane segment at 31-58 (RLLPPLYSLVFIFGFVGNILVVLILINC) threads the bilayer. Over 59–68 (KRLKSMTDIY) the chain is Cytoplasmic. The helical transmembrane segment at 69–89 (LLNLAISDLLFLLTVPFWAHY) threads the bilayer. Over 90-102 (AAAQWDFGNTMCQ) the chain is Extracellular. The chain crosses the membrane as a helical span at residues 103–124 (LLTGLYFIGFFSGIFFIILLTI). The Cytoplasmic segment spans residues 125-141 (DRYLAIVHAVFALKART). The chain crosses the membrane as a helical span at residues 142–166 (VTFGVVTSVITWVVAVFASLPGIIF). Residues 167-198 (TRSQREGLHYTCSSHFPYSQYQFWKNFQTLKM) are Extracellular-facing. A helical membrane pass occupies residues 199 to 218 (VILGLVLPLLVMVICYSGIL). Over 219-235 (KTLLRCRNEKKRHRAVR) the chain is Cytoplasmic. Residues 236–260 (LIFTIMIVYFLFWAPYNIVLLLNTF) form a helical membrane-spanning segment. Residues 261–277 (QEFFGLNNCSSSNRLDQ) lie on the Extracellular side of the membrane. Residues 278–301 (AMQVTETLGMTHCCINPIIYAFVG) traverse the membrane as a helical segment. The Cytoplasmic portion of the chain corresponds to 302–352 (EKFRNYLLVFFQKHIAKRFCKCCSIFQQEAPERASSVYTRSTGEQEISVGL). S-palmitoyl cysteine attachment occurs at residues cysteine 321, cysteine 323, and cysteine 324. Serine 336, serine 337, serine 342, and serine 349 each carry phosphoserine; by BARK1.

It belongs to the G-protein coupled receptor 1 family. Interacts with PRAF2. Efficient ligand binding to CCL3/MIP-1alpha and CCL4/MIP-1beta requires sulfation, O-glycosylation and sialic acid modifications. Glycosylation on Ser-6 is required for efficient binding of CCL4. Interacts with GRK2. Interacts with ARRB1 and ARRB2. Interacts with CNIH4. Interacts with S100A4; this interaction stimulates T-lymphocyte chemotaxis. Post-translationally, sulfated on at least 2 of the N-terminal tyrosines. Sulfation is required for efficient binding of the chemokines, CCL3 and CCL4. In terms of processing, palmitoylation in the C-terminal is important for cell surface expression. Phosphorylation on serine residues in the C-terminal is stimulated by binding CC chemokines especially by APO-RANTES. Post-translationally, O-glycosylated, but not N-glycosylated. Ser-6 appears to be the major site even if Ser-7 may be also O-glycosylated. Also sialylated glycans present which contribute to chemokine binding. Thr-16 and Ser-17 may also be glycosylated and, if so, with small moieties such as a T-antigen.

It localises to the cell membrane. In terms of biological role, receptor for a number of inflammatory CC-chemokines including CCL3/MIP-1-alpha, CCL4/MIP-1-beta and RANTES and subsequently transduces a signal by increasing the intracellular calcium ion level. May play a role in the control of granulocytic lineage proliferation or differentiation. Participates in T-lymphocyte migration to the infection site by acting as a chemotactic receptor. The polypeptide is C-C chemokine receptor type 5 (CCR5) (Macaca fascicularis (Crab-eating macaque)).